The sequence spans 440 residues: Tyrosine--tRNA ligase (440 aa).

Residue Y46 participates in L-tyrosine binding. The short motif at 51 to 60 (PTAASLHIGN) is the 'HIGH' region element. L-tyrosine-binding residues include Y181 and Q185. Positions 241 to 245 (KFGKS) match the 'KMSKS' region motif. An ATP-binding site is contributed by K244. One can recognise an S4 RNA-binding domain in the interval 373 to 439 (DRVIDAAQAA…GKKALGAVEN (67 aa)).

It belongs to the class-I aminoacyl-tRNA synthetase family. TyrS type 1 subfamily. Homodimer.

Its subcellular location is the cytoplasm. The catalysed reaction is tRNA(Tyr) + L-tyrosine + ATP = L-tyrosyl-tRNA(Tyr) + AMP + diphosphate + H(+). Functionally, catalyzes the attachment of tyrosine to tRNA(Tyr) in a two-step reaction: tyrosine is first activated by ATP to form Tyr-AMP and then transferred to the acceptor end of tRNA(Tyr). The chain is Tyrosine--tRNA ligase from Bifidobacterium longum (strain NCC 2705).